The primary structure comprises 435 residues: C4-dicarboxylate transport protein (435 aa).

Helical transmembrane passes span Ser-4 to Gly-24, Leu-44 to Met-64, Val-76 to Val-96, Ile-142 to Phe-162, Val-184 to Met-204, Leu-222 to Ala-242, Val-289 to Leu-309, Ile-326 to Val-346, and Ile-352 to Ile-372.

This sequence belongs to the dicarboxylate/amino acid:cation symporter (DAACS) (TC 2.A.23) family.

The protein localises to the cell inner membrane. Responsible for the transport of dicarboxylates such as succinate, fumarate, and malate from the periplasm across the membrane. This Salmonella paratyphi A (strain ATCC 9150 / SARB42) protein is C4-dicarboxylate transport protein.